A 506-amino-acid chain; its full sequence is H/ACA ribonucleoprotein complex subunit DKC1 (506 aa).

Residues 1 to 26 (MADTESKKEKKRKSKKISDEEVGDIQ) are disordered. Aspartate 120 serves as the catalytic Nucleophile. The 76-residue stretch at 291–366 (HKRIVMKDSA…VVAKIKRVIM (76 aa)) folds into the PUA domain. Disordered regions lie at residues 391 to 410 (GLLD…WKEG) and 419 to 506 (VKKG…ADSD). A compositionally biased stretch (basic and acidic residues) spans 421–434 (KGGEASAKRKRDES). A compositionally biased stretch (basic residues) spans 457–466 (EKKKKKKEKK).

Belongs to the pseudouridine synthase TruB family. Part of the H/ACA small nucleolar ribonucleoprotein (H/ACA snoRNP) complex. The complex binds a box H/ACA small nucleolar RNA (snoRNA), which may target the specific site of modification within the RNA substrate.

The protein resides in the nucleus. The protein localises to the nucleolus. It is found in the cajal body. It carries out the reaction uridine in 5S rRNA = pseudouridine in 5S rRNA. In terms of biological role, catalytic subunit of H/ACA small nucleolar ribonucleoprotein (H/ACA snoRNP) complex, which catalyzes pseudouridylation of rRNA. This involves the isomerization of uridine such that the ribose is subsequently attached to C5, instead of the normal N1. Pseudouridine ('psi') residues may serve to stabilize the conformation of rRNAs. Required for ribosome biogenesis and telomere maintenance. The polypeptide is H/ACA ribonucleoprotein complex subunit DKC1 (Danio rerio (Zebrafish)).